A 255-amino-acid chain; its full sequence is Hydroxyacylglutathione hydrolase (255 aa).

Zn(2+) is bound by residues H53, H55, D57, H58, H110, D127, and H165.

The protein belongs to the metallo-beta-lactamase superfamily. Glyoxalase II family. As to quaternary structure, monomer. Zn(2+) is required as a cofactor.

It catalyses the reaction an S-(2-hydroxyacyl)glutathione + H2O = a 2-hydroxy carboxylate + glutathione + H(+). It participates in secondary metabolite metabolism; methylglyoxal degradation; (R)-lactate from methylglyoxal: step 2/2. Thiolesterase that catalyzes the hydrolysis of S-D-lactoyl-glutathione to form glutathione and D-lactic acid. The polypeptide is Hydroxyacylglutathione hydrolase (Xanthomonas oryzae pv. oryzae (strain MAFF 311018)).